Here is a 583-residue protein sequence, read N- to C-terminus: Mitogen-activated protein kinase 4 (583 aa).

Positions 20-312 constitute a Protein kinase domain; it reads FIDFQPLGFG…AEMGLQHPYM (293 aa). Residues 26 to 34 and Lys49 each bind ATP; that span reads LGFGVNGLV. Residue Asp149 is the Proton acceptor of the active site. Phosphoserine; by PAK1, PAK2 and PAK3 is present on Ser186. Residues 186 to 188 carry the SEG motif motif; sequence SEG. Residues 328–333 carry the FRIEDE motif motif; sequence FRIEDE. Composition is skewed to basic and acidic residues over residues 366–379 and 391–410; these read DRCQDASEVQRDPR and VDPRKDSQSSSERFLEQSHS. A disordered region spans residues 366-410; the sequence is DRCQDASEVQRDPRAGSTPLAEDVQVDPRKDSQSSSERFLEQSHS. Phosphoserine is present on Ser430. The segment at 495-531 is disordered; sequence STQSGSERASPPPDAPEPRLSASPPGHPTPIDGGASP.

The protein belongs to the protein kinase superfamily. CMGC Ser/Thr protein kinase family. MAP kinase subfamily. In terms of assembly, homodimer. Heterodimer with ERK3/MAPK6. Interacts with (via FRIEDE motif) MAPKAPK5. Mg(2+) is required as a cofactor. Post-translationally, phosphorylated at Ser-186 by PAK1, PAK2 and PAK3 resulting in catalytic activation. Phosphorylated by MAPKAPK5 at other sites.

It is found in the cytoplasm. Its subcellular location is the nucleus. The enzyme catalyses L-seryl-[protein] + ATP = O-phospho-L-seryl-[protein] + ADP + H(+). It catalyses the reaction L-threonyl-[protein] + ATP = O-phospho-L-threonyl-[protein] + ADP + H(+). Activated by phosphorylation at Ser-186. Functionally, atypical MAPK protein. Phosphorylates microtubule-associated protein 2 (MAP2) and MAPKAPK5. The precise role of the complex formed with MAPKAPK5 is still unclear, but the complex follows a complex set of phosphorylation events: upon interaction with atypical MAPKAPK5, ERK4/MAPK4 is phosphorylated at Ser-186 and then mediates phosphorylation and activation of MAPKAPK5, which in turn phosphorylates ERK4/MAPK4. May promote entry in the cell cycle. The polypeptide is Mitogen-activated protein kinase 4 (Mapk4) (Mus musculus (Mouse)).